Here is a 979-residue protein sequence, read N- to C-terminus: Pro-apoptotic serine protease NMA111 (979 aa).

Residues 1–20 (MTIMNEGKKRSHSSSSDDHL) form a disordered region. The segment at 65-255 (VVSIHFAQVA…LPLDRILRAL (191 aa)) is serine protease. Active-site charge relay system residues include His103, Asp134, and Ser217. PDZ domains are found at residues 273-361 (WLLK…RGGT) and 750-836 (SILH…VRDG).

This sequence belongs to the peptidase S1C family.

The protein localises to the nucleus. Nuclear serine protease which mediates apoptosis. This chain is Pro-apoptotic serine protease NMA111 (NMA111), found in Candida glabrata (strain ATCC 2001 / BCRC 20586 / JCM 3761 / NBRC 0622 / NRRL Y-65 / CBS 138) (Yeast).